The following is a 424-amino-acid chain: Histidine--tRNA ligase (424 aa).

It belongs to the class-II aminoacyl-tRNA synthetase family. Homodimer.

The protein localises to the cytoplasm. It carries out the reaction tRNA(His) + L-histidine + ATP = L-histidyl-tRNA(His) + AMP + diphosphate + H(+). The polypeptide is Histidine--tRNA ligase (Protochlamydia amoebophila (strain UWE25)).